The chain runs to 148 residues: Hemoglobin subunit beta-A (148 aa).

Residues 3-148 enclose the Globin domain; sequence DWTDAERAAI…VVSALGRQYH (146 aa). Positions 64 and 93 each coordinate heme b.

Belongs to the globin family. As to quaternary structure, heterotetramer of two alpha chains and two beta chains. Red blood cells.

Involved in oxygen transport from gills to the various peripheral tissues. The chain is Hemoglobin subunit beta-A (hbb1) from Seriola quinqueradiata (Five-ray yellowtail).